A 479-amino-acid polypeptide reads, in one-letter code: Hydrogenase-4 component D (479 aa).

15 consecutive transmembrane segments (helical) span residues 3-23, 30-50, 55-75, 80-100, 117-137, 168-188, 208-228, 238-258, 270-290, 300-320, 330-350, 369-389, 390-410, 411-431, and 458-478; these read NLALTTLLLPFIGALVVSFSP, WGVLFAALTTLCMLSLISAFY, VAVTLTLVNVGDVALFGLVID, LILFVVVFLGLLVTIYSTGYL, AFLLVFIGAMAGLVLSSTLLG, ALLITHIGSLGLYLAAATLFL, LVYGGILFAAWGKSAQLPMQA, TPISAYLHAASMVKVGVYIFA, VIGGVGMVMALVTILYGFLMY, LAWSTITQLGWMFFGLSLSIF, IAYIVNHAFAKSLFFLVAGAL, LPLPGVGFCVAALAITGVPPF, NGFFSKFPLFAAGFALSVEYW, ILLPAMILLMIESVASFAWFI, and LVLIVLIVMSLISSVIAATWL.

The protein belongs to the complex I subunit 5 family.

It localises to the cell inner membrane. Possible component of hydrogenase 4. This is Hydrogenase-4 component D from Escherichia coli (strain K12).